The sequence spans 1238 residues: ATP-dependent helicase/nuclease subunit A (1238 aa).

The 469-residue stretch at 6 to 474 (TKWTETQKSA…IKLSENFRSR (469 aa)) folds into the UvrD-like helicase ATP-binding domain. Residue 27 to 34 (AGAGTGKT) participates in ATP binding. Positions 512 to 811 (PFEGNCGGDV…RIMSIHKSKG (300 aa)) constitute a UvrD-like helicase C-terminal domain.

Belongs to the helicase family. AddA subfamily. As to quaternary structure, heterodimer of AddA and AddB/RexB. Mg(2+) serves as cofactor.

It catalyses the reaction Couples ATP hydrolysis with the unwinding of duplex DNA by translocating in the 3'-5' direction.. It carries out the reaction ATP + H2O = ADP + phosphate + H(+). The heterodimer acts as both an ATP-dependent DNA helicase and an ATP-dependent, dual-direction single-stranded exonuclease. Recognizes the chi site generating a DNA molecule suitable for the initiation of homologous recombination. The AddA nuclease domain is required for chi fragment generation; this subunit has the helicase and 3' -&gt; 5' nuclease activities. This Clostridium kluyveri (strain NBRC 12016) protein is ATP-dependent helicase/nuclease subunit A.